Reading from the N-terminus, the 322-residue chain is ATP-dependent 6-phosphofructokinase (322 aa).

ATP-binding positions include glycine 12, 73–74 (RF), and 103–106 (GDGT). Position 104 (aspartate 104) interacts with Mg(2+). 126–128 (TID) contributes to the substrate binding site. Aspartate 128 serves as the catalytic Proton acceptor. Arginine 155 contributes to the ADP binding site. Residues arginine 163 and 170-172 (MGR) each bind substrate. Residues 186–188 (GSE), lysine 212, and 214–216 (KPS) contribute to the ADP site. Substrate contacts are provided by residues glutamate 223, arginine 245, and 251 to 254 (HTQR).

Belongs to the phosphofructokinase type A (PFKA) family. ATP-dependent PFK group I subfamily. Prokaryotic clade 'B1' sub-subfamily. As to quaternary structure, homotetramer. Requires Mg(2+) as cofactor.

It localises to the cytoplasm. The catalysed reaction is beta-D-fructose 6-phosphate + ATP = beta-D-fructose 1,6-bisphosphate + ADP + H(+). It participates in carbohydrate degradation; glycolysis; D-glyceraldehyde 3-phosphate and glycerone phosphate from D-glucose: step 3/4. Its activity is regulated as follows. Allosterically activated by ADP and other diphosphonucleosides, and allosterically inhibited by phosphoenolpyruvate. Its function is as follows. Catalyzes the phosphorylation of D-fructose 6-phosphate to fructose 1,6-bisphosphate by ATP, the first committing step of glycolysis. The sequence is that of ATP-dependent 6-phosphofructokinase from Mesomycoplasma hyopneumoniae (strain 7448) (Mycoplasma hyopneumoniae).